The following is a 385-amino-acid chain: MVEQTQHPTILQKVSGQLLSSSVSQDIRGYASASKRPATYQKHAAYGNYSNAAFQYPLVAASQIATTTSPVFVQAPGEKGFTNFAIDFMMGGVSAAVSKTAAAPIERVKLLIQNQDEMLKAGRLTEPYKGIRDCFGRTIRDEGIGSLWRGNTANVIRYFPTQALNFAFKDYFKRLFNFKKDKDGYWKWFAGNLASGGAAGASSLLFVYSLDYARTRLANDSKSAKKGGGERQFNGLVDVYKKTLKSDGIAGLYRGFNISCAGIIVYRGLYFGLYDSVKPVLLTGDLQDSFFASFALGWLITNGAGLASYPIDTVRRRMMMTSGEAVKYKSSFDAFSQIVKKEGAKSLFKGAGANILRAVAGAGVLAGYDKLQLIVFGKKYGSGGA.

Residues 1–74 (MVEQTQHPTI…ATTTSPVFVQ (74 aa)) constitute a mitochondrion transit peptide. Solcar repeat units follow at residues 82 to 175 (TNFA…FKRL), 187 to 280 (KWFA…VKPV), and 288 to 374 (DSFF…LQLI). Transmembrane regions (helical) follow at residues 84–111 (FAIDFMMGGVSAAVSKTAAAPIERVKLL), 152–176 (TANVIRYFPTQALNFAFKDYFKRLF), 185–205 (YWKWFAGNLASGGAAGASSLL), 256–277 (FNISCAGIIVYRGLYFGLYDSV), and 291–311 (FASFALGWLITNGAGLASYPI). Residues Arg-157 and Lys-169 each contribute to the ADP site. Arg-315 serves as a coordination point for ADP. The interval 315 to 320 (RRRMMM) is important for transport activity. The Nucleotide carrier signature motif motif lies at 315–320 (RRRMMM). The helical transmembrane segment at 351–371 (AGANILRAVAGAGVLAGYDKL) threads the bilayer.

It belongs to the mitochondrial carrier (TC 2.A.29) family. As to quaternary structure, monomer.

It is found in the mitochondrion inner membrane. The enzyme catalyses ADP(in) + ATP(out) = ADP(out) + ATP(in). Its activity is regulated as follows. The matrix-open state (m-state) is inhibited by the membrane-permeable bongkrekic acid (BKA). The cytoplasmic-open state (c-state) is inhibited by the membrane-impermeable toxic inhibitor carboxyatractyloside (CATR). In terms of biological role, ADP:ATP antiporter that mediates import of ADP into the mitochondrial matrix for ATP synthesis, and export of ATP out to fuel the cell. Cycles between the cytoplasmic-open state (c-state) and the matrix-open state (m-state): operates by the alternating access mechanism with a single substrate-binding site intermittently exposed to either the cytosolic (c-state) or matrix (m-state) side of the inner mitochondrial membrane. This chain is ADP,ATP carrier protein 2, mitochondrial (AAC2), found in Arabidopsis thaliana (Mouse-ear cress).